The sequence spans 303 residues: MMDVSGVGFPSKVPWKKMSAEELENQYCPSRWVVRLGAEEALRTYSQIGIEATTRARATRKSLLHVPYGDGEGEKVDIYFPDESSEALPFFLFFHGGYWQSGSKDESAFMVHPLTAQGVAVVIVAYGIAPKGTLDHMVDQVTRSVAFVQKRYPSNKGIYLCGHSAGAHLAAMMLLADWTKHGVTPNLRGFFLVSGVFDLEPIVYTSQNVALQLTLEDAQRNSPQLKVAQAQPVDPTCRVLVVVGQFDSPEFHRQSWEFYQTLCQGEWKASFEELHDVDHFEIVENLTQKDNVLTQIILKTIFQ.

The HGGXW motif lies at 95-99 (HGGYW). S164 (nucleophile) is an active-site residue. Active-site residues include D247 and H279.

Belongs to the kynurenine formamidase family. As to quaternary structure, homodimer.

It is found in the cytoplasm. Its subcellular location is the cytosol. The protein resides in the nucleus. The catalysed reaction is N-formyl-L-kynurenine + H2O = L-kynurenine + formate + H(+). The protein operates within amino-acid degradation; L-tryptophan degradation via kynurenine pathway; L-kynurenine from L-tryptophan: step 2/2. Its function is as follows. Catalyzes the hydrolysis of N-formyl-L-kynurenine to L-kynurenine, the second step in the kynurenine pathway of tryptophan degradation. Kynurenine may be further oxidized to nicotinic acid, NAD(H) and NADP(H). Required for elimination of toxic metabolites. The polypeptide is Kynurenine formamidase (Homo sapiens (Human)).